Here is a 109-residue protein sequence, read N- to C-terminus: Parvalbumin beta 2 (109 aa).

A2 carries the N-acetylalanine modification. EF-hand domains are found at residues K39–G74 and L78–A109. Positions 52, 54, 56, 58, 60, 63, 91, 93, 95, 97, and 102 each coordinate Ca(2+).

This sequence belongs to the parvalbumin family. Monomer.

Its function is as follows. In muscle, parvalbumin is thought to be involved in relaxation after contraction. It binds two calcium ions. This chain is Parvalbumin beta 2, found in Gadus morhua (Atlantic cod).